Reading from the N-terminus, the 326-residue chain is MLAWALLYAVLWSLAGVGSQRSSLFNIKGFVYGTVGHPVKIYVKLHQASPVLICMDIDRANKETVDPTYLWTGPNENTLKGNSQINITNTGELVLKDFLEPLSGLYSCMLSYKTIKAETQEETMIKKKYDFLVFAYREPDYSYHMAVRFTTGSCVGRHNDLLFRVLKKILDNLISDLLCHVIEPSYKCHFVKLPERDFLYELFIAFQVNPFAPGWRSLCNRSADCEDITNHNVLKARDRMEEFFRKQAHILHHHFNRTVPAMHFVDHSFQVTRIDNCRPGFGKNEGLHSNCATCCVVCSPGTFSPDVDVTCQICVSVHIYGAKACP.

The first 19 residues, 1–19 (MLAWALLYAVLWSLAGVGS), serve as a signal peptide directing secretion. N-linked (GlcNAc...) asparagine glycosylation is found at N86, N220, and N256.

This sequence belongs to the zona pellucida-binding protein Sp38 family. Post-translationally, N-glycosylated. As to expression, expressed specifically in male germ cells.

Its subcellular location is the cytoplasmic vesicle. The protein resides in the secretory vesicle. It localises to the acrosome. The protein localises to the secreted. Its function is as follows. Is implicated in sperm-oocyte interaction during fertilization. The protein is Zona pellucida-binding protein 2 (Zpbp2) of Mus musculus (Mouse).